The following is a 327-amino-acid chain: Lipoyl synthase (327 aa).

Positions 72, 77, 83, 98, 102, 105, and 313 each coordinate [4Fe-4S] cluster. Positions 83 to 302 constitute a Radical SAM core domain; that stretch reads CWSHGTATIM…RRVGLEKGFL (220 aa).

This sequence belongs to the radical SAM superfamily. Lipoyl synthase family. [4Fe-4S] cluster serves as cofactor.

It localises to the cytoplasm. The catalysed reaction is [[Fe-S] cluster scaffold protein carrying a second [4Fe-4S](2+) cluster] + N(6)-octanoyl-L-lysyl-[protein] + 2 oxidized [2Fe-2S]-[ferredoxin] + 2 S-adenosyl-L-methionine + 4 H(+) = [[Fe-S] cluster scaffold protein] + N(6)-[(R)-dihydrolipoyl]-L-lysyl-[protein] + 4 Fe(3+) + 2 hydrogen sulfide + 2 5'-deoxyadenosine + 2 L-methionine + 2 reduced [2Fe-2S]-[ferredoxin]. The protein operates within protein modification; protein lipoylation via endogenous pathway; protein N(6)-(lipoyl)lysine from octanoyl-[acyl-carrier-protein]: step 2/2. In terms of biological role, catalyzes the radical-mediated insertion of two sulfur atoms into the C-6 and C-8 positions of the octanoyl moiety bound to the lipoyl domains of lipoate-dependent enzymes, thereby converting the octanoylated domains into lipoylated derivatives. The chain is Lipoyl synthase from Francisella philomiragia subsp. philomiragia (strain ATCC 25017 / CCUG 19701 / FSC 153 / O#319-036).